Reading from the N-terminus, the 176-residue chain is Nucleoside triphosphate/diphosphate phosphatase (176 aa).

Arg-23 (proton donor) is an active-site residue. The Mg(2+) site is built by Asn-87, Asp-103, Asp-105, Asp-107, Asp-120, and Glu-123.

It belongs to the Ntdp family. Mg(2+) is required as a cofactor.

The enzyme catalyses a ribonucleoside 5'-triphosphate + H2O = a ribonucleoside 5'-diphosphate + phosphate + H(+). It catalyses the reaction a ribonucleoside 5'-diphosphate + H2O = a ribonucleoside 5'-phosphate + phosphate + H(+). Its function is as follows. Has nucleoside phosphatase activity towards nucleoside triphosphates and nucleoside diphosphates. The polypeptide is Nucleoside triphosphate/diphosphate phosphatase (Bacillus velezensis (strain DSM 23117 / BGSC 10A6 / LMG 26770 / FZB42) (Bacillus amyloliquefaciens subsp. plantarum)).